Here is a 28-residue protein sequence, read N- to C-terminus: Fibrinogen alpha chain (28 aa).

Phosphoserine is present on S3.

In terms of assembly, heterohexamer; disulfide linked. Contains 2 sets of 3 non-identical chains (alpha, beta and gamma). The 2 heterotrimers are in head to head conformation with the N-termini in a small central domain. Conversion of fibrinogen to fibrin is triggered by thrombin, which cleaves fibrinopeptides A and B from alpha and beta chains, and thus exposes the N-terminal polymerization sites responsible for the formation of the soft clot. The soft clot is converted into the hard clot by factor XIIIA which catalyzes the epsilon-(gamma-glutamyl)lysine cross-linking between gamma chains (stronger) and between alpha chains (weaker) of different monomers. In terms of processing, forms F13A-mediated cross-links between a glutamine and the epsilon-amino group of a lysine residue, forming fibronectin-fibrinogen heteropolymers.

It is found in the secreted. Functionally, cleaved by the protease thrombin to yield monomers which, together with fibrinogen beta (FGB) and fibrinogen gamma (FGG), polymerize to form an insoluble fibrin matrix. Fibrin has a major function in hemostasis as one of the primary components of blood clots. In addition, functions during the early stages of wound repair to stabilize the lesion and guide cell migration during re-epithelialization. Was originally thought to be essential for platelet aggregation, based on in vitro studies using anticoagulated blood. However, subsequent studies have shown that it is not absolutely required for thrombus formation in vivo. Enhances expression of SELP in activated platelets via an ITGB3-dependent pathway. Maternal fibrinogen is essential for successful pregnancy. Fibrin deposition is also associated with infection, where it protects against IFNG-mediated hemorrhage. May also facilitate the immune response via both innate and T-cell mediated pathways. The protein is Fibrinogen alpha chain (FGA) of Canis lupus familiaris (Dog).